Here is a 457-residue protein sequence, read N- to C-terminus: Acetylcholine receptor subunit alpha (457 aa).

A signal peptide spans 1 to 20 (MEPWPLLLLFSLCSAGLVLG). Residues 21–232 (SEHETRLVAK…YHFVMQRLPL (212 aa)) are Extracellular-facing. 2 disulfide bridges follow: cysteine 148-cysteine 162 and cysteine 212-cysteine 213. A glycan (N-linked (GlcNAc...) asparagine) is linked at asparagine 161. Residues 233–253 (YFIVNVIIPCLLFSFLTGLVF) traverse the membrane as a helical segment. The Cytoplasmic segment spans residues 254 to 264 (YLPTDSGEKMT). A helical membrane pass occupies residues 265–285 (LSISVLLSLTVFLLVIVELIP). Over 286-296 (STSSAVPLIGK) the chain is Extracellular. Residues 297 to 317 (YMLFTMVFVIASIIITVIVIN) traverse the membrane as a helical segment. Residues 318–427 (THHRSPSTHV…EWKYVAMVMD (110 aa)) lie on the Cytoplasmic side of the membrane. The chain crosses the membrane as a helical span at residues 428–448 (HILLGVFMLVCIIGTLAVFAG). At 449–457 (RLIELNQQG) the chain is on the extracellular side.

The protein belongs to the ligand-gated ion channel (TC 1.A.9) family. Acetylcholine receptor (TC 1.A.9.1) subfamily. Alpha-1/CHRNA1 sub-subfamily. As to quaternary structure, one of the alpha chains that assemble within the acetylcholine receptor, a pentamer of two alpha chains, a beta, a delta, and a gamma (in immature muscle) or epsilon (in mature muscle) chains. The muscle heteropentamer composed of alpha-1, beta-1, delta, epsilon subunits interacts with the alpha-conotoxin ImII. In terms of assembly, is able to interact with other subunits of the acetylcholine receptor but is not assembled into functional acetylcholine-gated cation-selective channels. In terms of tissue distribution, isoform 1 is only expressed in skeletal muscle. Isoform 2 is constitutively expressed in skeletal muscle, brain, heart, kidney, liver, lung and thymus.

It is found in the postsynaptic cell membrane. Its subcellular location is the cell membrane. The catalysed reaction is K(+)(in) = K(+)(out). It catalyses the reaction Na(+)(in) = Na(+)(out). In terms of biological role, upon acetylcholine binding, the AChR responds by an extensive change in conformation that affects all subunits and leads to opening of an ion-conducting channel across the plasma membrane. Functionally, non functional acetylcholine receptor alpha subunit which is not integrated into functional acetylcholine-gated cation-selective channels. The protein is Acetylcholine receptor subunit alpha of Homo sapiens (Human).